Here is a 185-residue protein sequence, read N- to C-terminus: Mitochondrial inner membrane protease atp23 (185 aa).

Histidine 86 is a binding site for a divalent metal cation. Glutamate 87 is a catalytic residue. An a divalent metal cation-binding site is contributed by histidine 90.

The protein belongs to the peptidase M76 family.

The protein resides in the mitochondrion inner membrane. Functionally, has a dual role in the assembly of mitochondrial ATPase. Acts as a protease that removes N-terminal residues of mitochondrial ATPase CF(0) subunit 6 at the intermembrane space side. Also involved in the correct assembly of the membrane-embedded ATPase CF(0) particle, probably mediating association of subunit 6 with the subunit 9 ring. This Schizosaccharomyces pombe (strain 972 / ATCC 24843) (Fission yeast) protein is Mitochondrial inner membrane protease atp23 (atp23).